Consider the following 409-residue polypeptide: Putative protein disulfide-isomerase DDB_G0275025 (409 aa).

A signal peptide spans 1–21 (MKLINICIFIFAIICIESTFG). A Thioredoxin domain is found at 28–140 (NVINLTKKNF…AKFSLAKLPS (113 aa)). Cys57 and Cys60 are disulfide-bonded. The tract at residues 245-273 (SNNDNNNNNNNNNNEESTKTTTTEKDPAS) is disordered. The segment covering 247–259 (NDNNNNNNNNNNE) has biased composition (low complexity). Basic and acidic residues predominate over residues 260–273 (ESTKTTTTEKDPAS). A Prevents secretion from ER motif is present at residues 406–409 (KDEL).

This sequence belongs to the protein disulfide isomerase family.

It localises to the endoplasmic reticulum lumen. It carries out the reaction Catalyzes the rearrangement of -S-S- bonds in proteins.. This chain is Putative protein disulfide-isomerase DDB_G0275025, found in Dictyostelium discoideum (Social amoeba).